A 44-amino-acid chain; its full sequence is Photosystem II reaction center protein K (44 aa).

Positions 1-7 (METLLLS) are excised as a propeptide. Residues 23 to 43 (LPIIPVFFLLLAFVWQAAIGF) form a helical membrane-spanning segment.

It belongs to the PsbK family. In terms of assembly, PSII is composed of 1 copy each of membrane proteins PsbA, PsbB, PsbC, PsbD, PsbE, PsbF, PsbH, PsbI, PsbJ, PsbK, PsbL, PsbM, PsbT, PsbX, PsbY, PsbZ, Psb30/Ycf12, at least 3 peripheral proteins of the oxygen-evolving complex and a large number of cofactors. It forms dimeric complexes.

It localises to the plastid. The protein resides in the chloroplast thylakoid membrane. One of the components of the core complex of photosystem II (PSII). PSII is a light-driven water:plastoquinone oxidoreductase that uses light energy to abstract electrons from H(2)O, generating O(2) and a proton gradient subsequently used for ATP formation. It consists of a core antenna complex that captures photons, and an electron transfer chain that converts photonic excitation into a charge separation. In Phaeodactylum tricornutum (strain CCAP 1055/1), this protein is Photosystem II reaction center protein K.